The following is a 313-amino-acid chain: MSQEFSHLSVLLTETVAGLNIKPDGIYIDGTFGRGGHSREVLKHLGDNGRLIAIDRDPQAIIAAEQFADDARFSIVHGGFGQLADYVEDLGLKGKVDGVLLDFGVSSPQLDDAERGFSFLRDGPLDMRMDNSQGQTAAEWIARTEIEDMAWVFKTYGEEKNSRHIARCIAADRDKTPFLRTKELADLIARICKSKERNKHPATRVFQAIRIYINSELEQIDQALEGALKVLAPQGRLSVISFHSLEDRIVKRFIRRHSQGMSVPHGLPITEAEINKTRLLKAVGKATKPSTEEVEMNKRSRSSVLRVAERLEY.

Residues 35–37 (GGH), aspartate 55, phenylalanine 80, aspartate 102, and glutamine 109 each bind S-adenosyl-L-methionine.

Belongs to the methyltransferase superfamily. RsmH family.

The protein localises to the cytoplasm. It catalyses the reaction cytidine(1402) in 16S rRNA + S-adenosyl-L-methionine = N(4)-methylcytidine(1402) in 16S rRNA + S-adenosyl-L-homocysteine + H(+). Functionally, specifically methylates the N4 position of cytidine in position 1402 (C1402) of 16S rRNA. The protein is Ribosomal RNA small subunit methyltransferase H of Shewanella violacea (strain JCM 10179 / CIP 106290 / LMG 19151 / DSS12).